Consider the following 254-residue polypeptide: Type III pantothenate kinase (254 aa).

6 to 13 provides a ligand contact to ATP; that stretch reads DVGNSNIV. Substrate contacts are provided by residues Tyr-100 and 107–110; that span reads GADR. Catalysis depends on Asp-109, which acts as the Proton acceptor. Asp-129 is a binding site for K(+). Thr-132 contacts ATP. Thr-184 contributes to the substrate binding site.

This sequence belongs to the type III pantothenate kinase family. In terms of assembly, homodimer. The cofactor is NH4(+). K(+) is required as a cofactor.

The protein localises to the cytoplasm. The catalysed reaction is (R)-pantothenate + ATP = (R)-4'-phosphopantothenate + ADP + H(+). The protein operates within cofactor biosynthesis; coenzyme A biosynthesis; CoA from (R)-pantothenate: step 1/5. Functionally, catalyzes the phosphorylation of pantothenate (Pan), the first step in CoA biosynthesis. The protein is Type III pantothenate kinase of Geobacter sp. (strain M21).